The sequence spans 416 residues: UDP-N-acetylmuramoylalanine--D-glutamate ligase (416 aa).

104 to 110 (GSNGKST) contacts ATP.

Belongs to the MurCDEF family.

Its subcellular location is the cytoplasm. It carries out the reaction UDP-N-acetyl-alpha-D-muramoyl-L-alanine + D-glutamate + ATP = UDP-N-acetyl-alpha-D-muramoyl-L-alanyl-D-glutamate + ADP + phosphate + H(+). The protein operates within cell wall biogenesis; peptidoglycan biosynthesis. In terms of biological role, cell wall formation. Catalyzes the addition of glutamate to the nucleotide precursor UDP-N-acetylmuramoyl-L-alanine (UMA). This Francisella tularensis subsp. tularensis (strain WY96-3418) protein is UDP-N-acetylmuramoylalanine--D-glutamate ligase.